Reading from the N-terminus, the 66-residue chain is Toxin BomPI (66 aa).

The region spanning 2 to 64 (RDAYIAQPEN…VPIRIEGKCH (63 aa)) is the LCN-type CS-alpha/beta domain. Cystine bridges form between cysteine 12–cysteine 63, cysteine 16–cysteine 36, cysteine 22–cysteine 46, and cysteine 26–cysteine 48.

Belongs to the long (4 C-C) scorpion toxin superfamily. Sodium channel inhibitor family. Alpha subfamily. In terms of tissue distribution, expressed by the venom gland.

It localises to the secreted. Functionally, alpha toxins bind voltage-independently at site-3 of sodium channels (Nav) and inhibit the inactivation of the activated channels, thereby blocking neuronal transmission. This Buthus occitanus mardochei (Moroccan scorpion) protein is Toxin BomPI.